Here is a 252-residue protein sequence, read N- to C-terminus: Urease accessory protein UreD (252 aa).

The protein belongs to the UreD family. UreD, UreF and UreG form a complex that acts as a GTP-hydrolysis-dependent molecular chaperone, activating the urease apoprotein by helping to assemble the nickel containing metallocenter of UreC. The UreE protein probably delivers the nickel.

The protein resides in the cytoplasm. Required for maturation of urease via the functional incorporation of the urease nickel metallocenter. The polypeptide is Urease accessory protein UreD (Streptomyces avermitilis (strain ATCC 31267 / DSM 46492 / JCM 5070 / NBRC 14893 / NCIMB 12804 / NRRL 8165 / MA-4680)).